Reading from the N-terminus, the 517-residue chain is Bifunctional purine biosynthesis protein PurH (517 aa).

The MGS-like domain occupies 1–145; sequence MSPLALVSVS…KNHKYVSVLV (145 aa).

This sequence belongs to the PurH family.

The catalysed reaction is (6R)-10-formyltetrahydrofolate + 5-amino-1-(5-phospho-beta-D-ribosyl)imidazole-4-carboxamide = 5-formamido-1-(5-phospho-D-ribosyl)imidazole-4-carboxamide + (6S)-5,6,7,8-tetrahydrofolate. The enzyme catalyses IMP + H2O = 5-formamido-1-(5-phospho-D-ribosyl)imidazole-4-carboxamide. It functions in the pathway purine metabolism; IMP biosynthesis via de novo pathway; 5-formamido-1-(5-phospho-D-ribosyl)imidazole-4-carboxamide from 5-amino-1-(5-phospho-D-ribosyl)imidazole-4-carboxamide (10-formyl THF route): step 1/1. It participates in purine metabolism; IMP biosynthesis via de novo pathway; IMP from 5-formamido-1-(5-phospho-D-ribosyl)imidazole-4-carboxamide: step 1/1. The protein is Bifunctional purine biosynthesis protein PurH of Prochlorococcus marinus (strain MIT 9215).